The following is a 242-amino-acid chain: 4-hydroxy-tetrahydrodipicolinate reductase (242 aa).

NAD(+) is bound by residues 8 to 13, 75 to 77, and 99 to 102; these read GAKGRM, GTT, and ATNM. The Proton donor/acceptor role is filled by His131. His132 lines the (S)-2,3,4,5-tetrahydrodipicolinate pocket. Lys135 serves as the catalytic Proton donor. 141–142 serves as a coordination point for (S)-2,3,4,5-tetrahydrodipicolinate; sequence GT.

This sequence belongs to the DapB family.

The protein resides in the cytoplasm. The enzyme catalyses (S)-2,3,4,5-tetrahydrodipicolinate + NAD(+) + H2O = (2S,4S)-4-hydroxy-2,3,4,5-tetrahydrodipicolinate + NADH + H(+). The catalysed reaction is (S)-2,3,4,5-tetrahydrodipicolinate + NADP(+) + H2O = (2S,4S)-4-hydroxy-2,3,4,5-tetrahydrodipicolinate + NADPH + H(+). It participates in amino-acid biosynthesis; L-lysine biosynthesis via DAP pathway; (S)-tetrahydrodipicolinate from L-aspartate: step 4/4. Its function is as follows. Catalyzes the conversion of 4-hydroxy-tetrahydrodipicolinate (HTPA) to tetrahydrodipicolinate. This is 4-hydroxy-tetrahydrodipicolinate reductase from Campylobacter jejuni subsp. jejuni serotype O:6 (strain 81116 / NCTC 11828).